The sequence spans 2275 residues: MSKRQKEFHDSLANEKTRVRLYKSGKNWVKSGIKEIEMFKIMGLPFISHSLVSQDNQSISKKMTGYGLKTTAVIGGAFTVNMLHDQQAFAASDAPLTSELNTQSETVGNQNSTTIEASTSTADSTSVTKNSSSVQTSNSDTVSSEKSEKVTSTTNSTSNQQEKLTSTSESTSSKNTTSSSDTKSVASTSSTEQPINTSTNQSTASNNTSQSTTPSSVNLNKTSTTSTSTAPVKLRTFSRLAMSTFASAATTTAVTANTITVNKDNLKQYMTTSGNATYDQSTGIVTLTQDAYSQKGAITLGTRIDSNKSFHFSGKVNLGNKYEGNGNGGDGIGFAFSPGVLGETGLNGAAVGIGGLSNAFGFKLDTYHNTSKPNSAAKANADPSNVAGGGAFGAFVTTDSYGVATTYTSSSTADNAAKLKVQPTNNTFQDFDINYNGDTKVMTVTYAGQTWTRNISDWIAKSGTTNFSLSMTASTGGATNLQQVQFGTFEYTESAVTQVRYVDVTTGKDIIPPKTYSGNVDQVVTIDNQQSALTAKGYNYTSVDSSYASTYNDTNKTVKMTNAGQSVTYYFTDVKAPTVTVGNQTIEVGKTMNPVVLTTTDNGTGTVTNTVTGLPSGLSYDSATNSIIGTPTKIGQSTVTVVSTDQANNKSTTTFTINVVDTTAPTVTPIGDQSSEVYSPISPIKIATQDNSGNAVTNTVTGLPSGLTFDSTNNTISGTPTNIGTSTITIVSTDASGNKTTTTFKYEVTRNSMSDSVSTSGSTQQSQSVSTSKADSQSASTSTSGSIVVSTSASTSKSTSVSLSDSVSASKSLSTSESNSVSSSTSTSLVNSQSVSSSMSDSASKSTSLSDSISNSSSTEKSESLSTSTSDSLRTSTSLSDSLSMSTSGSLSKSQSLSTSTSESSSTSASLSDSTSNAISTSESLSESASTSDSISISNSIANSQSASTSKSDSQSTSISLSTSDSKSMSTSESLSDSTSTSGSVSGSLSIAASQSVSTSTSDSMSTSEIVSDSISTSGSLSASDSKSMSVSSSMSTSQSGSTSESLSDSQSTSDSDSKSLSLSTSQSGSTSTSTSTSASVRTSESQSTSGSMSASQSDSMSISTSFSDSTSDSKSASTASSESISQSASTSTSGSVSTSTSLSTSNSERTSTSMSDSTSLSTSESDSISESTSTSDSISEAISASESTFISLSESNSTSDSESQSASAFLSESLSESTSESTSESVSSSTSESTSLSDSTSESGSTSTSLSNSTSGSASISTSTSISESTSTFKSESVSTSLSMSTSTSLSDSTSLSTSLSDSTSDSKSDSLSTSMSTSDSISTSKSDSISTSTSLSGSTSESESDSTSSSESKSDSTSMSISMSQSTSGSTSTSTSTSLSDSTSTSLSLSASMNQSGVDSNSASQSASNSTSTSTSESDSQSTSSYTSQSTSQSESTSTSTSLSDSTSISKSTSQSGSVSTSASLSGSESESDSQSISTSASESTSESASTSLSDSTSTSNSGSASTSTSLSNSASASESDSSSTSLSDSTSASMQSSESDSQSTSASLSDSLSTSTSNRMSTIASLSTSVSTSESGSTSESTSESDSTSTSLSDSQSTSRSTSASGSASTSTSTSDSRSTSASTSTSMRTSTSDSQSMSLSTSTSTSMSDSTSLSDSVSDSTSDSTSASTSGSMSVSISLSDSTSTSTSASEVMSASISDSQSMSESVNDSESVSESNSESDSKSMSGSTSVSDSGSLSVSTSLRKSESVSESSSLSGSQSMSDSVSTSDSSSLSVSTSLRSSESVSESDSLSDSKSTSGSTSTSTSGSLSTSTSLSGSESVSESTSLSDSISMSDSTSTSDSDSLSGSISLSGSTSLSTSDSLSDSKSLSSSQSMSGSESTSTSVSDSQSSSTSNSQFDSMSISASESDSMSTSDSSSISGSNSTSTSLSTSDSMSGSVSVSTSTSLSDSISGSTSLSDSSSTSTSTSLSDSMSQSQSTSTSASGSLSTSISTSMSMSASTSSSQSTSVSTSLSTSDSISDSTSISISGSQSTVESESTSDSTSISDSESLSTSDSDSTSTSTSDSTSGSTSTSISESLSTSGSGSTSVSDSTSMSESDSTSVSMSQSMSGSTYNSTSVSDSESVSTSTSTSLSTSDSTSTSESLSTSMSGSQSISDSTSTSMSGSTSTSESNSMHPSDSMSMHHTHSTSTSRLSSEATTSTSESQSTLSATSEVTKHNGTPAQSEKRLPDTGDSIKQNGLLGGVMTLLVGLGLMKRKKKKDENDQDDSQA.

Positions Met-1–Phe-89 are cleaved as a signal peptide. The interval Ala-90 to Asp-264 is serine-rich repeat region 1, SRR1. Residues Leu-100–Asn-111 show a composition bias toward polar residues. Disordered stretches follow at residues Leu-100–Thr-229 and Asn-751–Gly-2247. A compositionally biased stretch (low complexity) spans Ser-112–Thr-128. The span at Lys-129 to Asp-140 shows a compositional bias: polar residues. The span at Val-150–Thr-229 shows a compositional bias: low complexity. A non-repeat region (NRR) region spans residues Asn-265–Asn-751. Low complexity-rich tracts occupy residues Ser-752 to Ser-1392 and Ser-1402 to Glu-2218. A serine-rich repeat region 2, SRR2 region spans residues Ser-752–Thr-2236. The LPXTG sorting signal signature appears at Leu-2233–Gly-2237. Thr-2236 is modified (pentaglycyl murein peptidoglycan amidated threonine). Residues Gly-2237–Ala-2275 constitute a propeptide, removed by sortase.

Belongs to the serine-rich repeat protein (SRRP) family. Interacts with human gp-340 (DMBT1). Post-translationally, proteolytically cleaved by a metalloprotease. In terms of processing, glycosylated. It is probable that most of the Ser residues in SSR1 and SSR2 are O-GlcNAcylated. Sequential glycosylation by sugar transferases are able to generate complex sugar polymorphisms.

It is found in the secreted. It localises to the cell wall. Its function is as follows. Mediates binding to human platelets, possibly through a receptor-ligand interaction. Probably associated with virulence in endovascular infection. Interacts with host (human) gp-340 via the non-repeat region (NRR or binding region). Binding is inhibited by N-acetylneuraminic acid (NeuAc). In Staphylococcus aureus (strain MW2), this protein is Serine-rich adhesin for platelets (sraP).